The primary structure comprises 157 residues: 2-C-methyl-D-erythritol 2,4-cyclodiphosphate synthase (157 aa).

A divalent metal cation-binding residues include aspartate 8 and histidine 10. Residues 8–10 (DVH) and 34–35 (HS) each bind 4-CDP-2-C-methyl-D-erythritol 2-phosphate. Histidine 42 provides a ligand contact to a divalent metal cation. 4-CDP-2-C-methyl-D-erythritol 2-phosphate-binding positions include 56-58 (DIG), 132-135 (TTNE), phenylalanine 139, and arginine 142.

It belongs to the IspF family. Homotrimer. A divalent metal cation serves as cofactor.

The enzyme catalyses 4-CDP-2-C-methyl-D-erythritol 2-phosphate = 2-C-methyl-D-erythritol 2,4-cyclic diphosphate + CMP. It participates in isoprenoid biosynthesis; isopentenyl diphosphate biosynthesis via DXP pathway; isopentenyl diphosphate from 1-deoxy-D-xylulose 5-phosphate: step 4/6. Involved in the biosynthesis of isopentenyl diphosphate (IPP) and dimethylallyl diphosphate (DMAPP), two major building blocks of isoprenoid compounds. Catalyzes the conversion of 4-diphosphocytidyl-2-C-methyl-D-erythritol 2-phosphate (CDP-ME2P) to 2-C-methyl-D-erythritol 2,4-cyclodiphosphate (ME-CPP) with a corresponding release of cytidine 5-monophosphate (CMP). In Symbiobacterium thermophilum (strain DSM 24528 / JCM 14929 / IAM 14863 / T), this protein is 2-C-methyl-D-erythritol 2,4-cyclodiphosphate synthase.